A 115-amino-acid polypeptide reads, in one-letter code: MNLERLNEIEKPLLHIVKHDVVPALGCTEPISLALASATAAKYLGKTPERIEVKVSPNLMKNGLGVAVPGTGMVGLPIAAAMKVLSNTILIELLIISALLHQKVCSISTDRLSKL.

It belongs to the UPF0597 family.

This chain is UPF0597 protein NTHI1023, found in Haemophilus influenzae (strain 86-028NP).